The following is a 151-amino-acid chain: Ribosome maturation factor RimP (151 aa).

This sequence belongs to the RimP family.

It is found in the cytoplasm. Required for maturation of 30S ribosomal subunits. The polypeptide is Ribosome maturation factor RimP (Synechocystis sp. (strain ATCC 27184 / PCC 6803 / Kazusa)).